The sequence spans 379 residues: Armadillo repeat-containing X-linked protein 3 (379 aa).

Residues 1 to 6 are Mitochondrial intermembrane-facing; it reads MGYARK. Mitochondrion outer membrane (MOM)-targeting sequence regions lie at residues 1-6 and 26-37; these read MGYARK and RLTRGRKQNKEK. A helical; Signal-anchor membrane pass occupies residues 7–29; it reads VGWVTAGLVIGAGACYCIYRLTR. Over 30 to 379 the chain is Cytoplasmic; the sequence is GRKQNKEKMA…AEHMFPKSQE (350 aa). Residues serine 61, serine 67, and serine 72 each carry the phosphoserine modification. Residues 89 to 98 form a nuclear localization signal region; that stretch reads RARARARARA. Residues 95-106 are compositionally biased toward basic residues; sequence RARATRARRAVQ. The disordered stretch occupies residues 95 to 116; the sequence is RARATRARRAVQKRASPNSDDT. A Phosphoserine modification is found at serine 110. 3 ARM repeats span residues 111-151, 153-192, and 233-272; these read PNSD…NNAA, AFNR…NLSV, and VTNE…NLAE.

The protein belongs to the eutherian X-chromosome-specific Armcx family. As to quaternary structure, interacts (via ARM domain) with MIRO1, MIRO2 and TRAK2. The interaction with Miro is calcium-dependent. Interacts with SOX10.

It is found in the mitochondrion outer membrane. The protein localises to the cytoplasm. It localises to the nucleus. Its function is as follows. Regulates mitochondrial aggregation and transport in axons in living neurons. May link mitochondria to the TRAK2-kinesin motor complex via its interaction with Miro and TRAK2. Mitochondrial distribution and dynamics is regulated through ARMCX3 protein degradation, which is promoted by PCK and negatively regulated by WNT1. Enhances the SOX10-mediated transactivation of the neuronal acetylcholine receptor subunit alpha-3 and beta-4 subunit gene promoters. In Homo sapiens (Human), this protein is Armadillo repeat-containing X-linked protein 3 (ARMCX3).